Here is a 340-residue protein sequence, read N- to C-terminus: DNA-directed RNA polymerase subunit alpha (340 aa).

An alpha N-terminal domain (alpha-NTD) region spans residues 1–236 (MLSLSKNWNT…EQLQLFISFE (236 aa)). An alpha C-terminal domain (alpha-CTD) region spans residues 246 to 340 (TDALPFSPYL…LSNRYEDSYN (95 aa)).

The protein belongs to the RNA polymerase alpha chain family. In terms of assembly, homodimer. The RNAP catalytic core consists of 2 alpha, 1 beta, 1 beta' and 1 omega subunit. When a sigma factor is associated with the core the holoenzyme is formed, which can initiate transcription.

It catalyses the reaction RNA(n) + a ribonucleoside 5'-triphosphate = RNA(n+1) + diphosphate. Functionally, DNA-dependent RNA polymerase catalyzes the transcription of DNA into RNA using the four ribonucleoside triphosphates as substrates. The chain is DNA-directed RNA polymerase subunit alpha from Rickettsia felis (strain ATCC VR-1525 / URRWXCal2) (Rickettsia azadi).